We begin with the raw amino-acid sequence, 305 residues long: Uracil-DNA glycosylase (305 aa).

The Proton acceptor role is filled by Asp-148.

This sequence belongs to the uracil-DNA glycosylase (UDG) superfamily. UNG family.

It is found in the host nucleus. The catalysed reaction is Hydrolyzes single-stranded DNA or mismatched double-stranded DNA and polynucleotides, releasing free uracil.. Excises uracil residues from the DNA which can arise as a result of misincorporation of dUMP residues by DNA polymerase or deamination of cytosines. Therefore may reduce deleterious uracil incorporation into the viral genome, particularly in terminally differentiated cells which lack DNA repair enzymes. The chain is Uracil-DNA glycosylase from Varicella-zoster virus (strain Dumas) (HHV-3).